The following is a 346-amino-acid chain: tRNA pseudouridine synthase D (346 aa).

Asp-83 functions as the Nucleophile in the catalytic mechanism. Positions 159–305 constitute a TRUD domain; the sequence is GVPNYFGEQR…LKQERRALRV (147 aa).

This sequence belongs to the pseudouridine synthase TruD family.

It carries out the reaction uridine(13) in tRNA = pseudouridine(13) in tRNA. Its function is as follows. Responsible for synthesis of pseudouridine from uracil-13 in transfer RNAs. This Hydrogenovibrio crunogenus (strain DSM 25203 / XCL-2) (Thiomicrospira crunogena) protein is tRNA pseudouridine synthase D.